The chain runs to 252 residues: Indole-3-glycerol phosphate synthase (252 aa).

This sequence belongs to the TrpC family.

The enzyme catalyses 1-(2-carboxyphenylamino)-1-deoxy-D-ribulose 5-phosphate + H(+) = (1S,2R)-1-C-(indol-3-yl)glycerol 3-phosphate + CO2 + H2O. Its pathway is amino-acid biosynthesis; L-tryptophan biosynthesis; L-tryptophan from chorismate: step 4/5. This chain is Indole-3-glycerol phosphate synthase, found in Bacillus licheniformis (strain ATCC 14580 / DSM 13 / JCM 2505 / CCUG 7422 / NBRC 12200 / NCIMB 9375 / NCTC 10341 / NRRL NRS-1264 / Gibson 46).